A 120-amino-acid chain; its full sequence is Cell division protein FtsL (120 aa).

Residues 1 to 36 are Cytoplasmic-facing; sequence MTNLAVKYKQQAQEEVQIQTPPQQMAKPKVKAKITR. Residues 37–57 form a helical membrane-spanning segment; it reads IEKLLYVAFIGFLLYACVAFI. Topologically, residues 58 to 120 are extracellular; that stretch reads GNKAGLYQVN…INANNVKGLK (63 aa).

The protein belongs to the FtsL family.

It is found in the cell membrane. Functionally, essential cell division protein. In Bacillus cereus (strain ATCC 14579 / DSM 31 / CCUG 7414 / JCM 2152 / NBRC 15305 / NCIMB 9373 / NCTC 2599 / NRRL B-3711), this protein is Cell division protein FtsL.